The chain runs to 603 residues: MAFNFNWSPLIADTSRARDMLTTALNKSPKPPIIVDDIIVTELNLGTTPPELEILEIGDLAEDRFRGIFKMSYAGDAFLTLKTKVQANPLKTYLSNKPDFASPQPLAAAAGLTIPLQITLSNIRLSGFVILVFSKQKGLTLVFRNDPLESLKVSSTFDSIPFVRDYLQKEIEGQLRVLFMEDLPAIIHRLSLRMLSPEYQEIETEERLEGANDTTAAIDPLASPPEDAVDAFGNPLDEAQISAMSLDSGEIHASFSQKNILRLAALSESQRTLSLFTPGIREAVFRAWAGHPDRAESGAATPALTQGSLSRIQSTFGSLKSGASSVASGSTGNETLSSRPTLASSYSTSAGISLGSGRSRAGGMRKRKKRVVDLRRKDGADSGVSTEANTPLPSTQVSDTSSVIPEEREAEEELATPPTSPPQPGRRFESRRGSLDVGTPKRIPEEPPTFGPLLAPAPLIPNASKAAKSKRTVSPPAHLEDPFVSHTSSRRPPISRNKLRQAQQSTSPLLRSLSFDKVSSLSALCSPPRISSPPNADLMSSSGGILEQAWMQKMAQEIARKVQEEKDKSSGQRRPSHSRTKTAPTGGFWQGEDEVEAPPAYVA.

The SMP-LTD domain occupies 1–205 (MAFNFNWSPL…SPEYQEIETE (205 aa)). The segment covering 320-332 (KSGASSVASGSTG) has biased composition (low complexity). Disordered regions lie at residues 320 to 511 (KSGA…PLLR) and 558 to 603 (IARK…AYVA). Residues 333-351 (NETLSSRPTLASSYSTSAG) show a composition bias toward polar residues. A compositionally biased stretch (basic and acidic residues) spans 371–380 (VVDLRRKDGA). Residues 383 to 403 (GVSTEANTPLPSTQVSDTSSV) show a composition bias toward polar residues. Residues 452 to 463 (PLLAPAPLIPNA) are compositionally biased toward low complexity. Positions 500 to 509 (RQAQQSTSPL) are enriched in polar residues. The segment covering 558–570 (IARKVQEEKDKSS) has biased composition (basic and acidic residues).

This sequence belongs to the MDM34 family. Component of the ER-mitochondria encounter structure (ERMES) or MDM complex, composed of mmm1, mdm10, mdm12 and mdm34.

It localises to the mitochondrion outer membrane. Functionally, component of the ERMES/MDM complex, which serves as a molecular tether to connect the endoplasmic reticulum (ER) and mitochondria. Components of this complex are involved in the control of mitochondrial shape and protein biogenesis, and function in nonvesicular lipid trafficking between the ER and mitochondria. Mdm34 is required for the interaction of the ER-resident membrane protein mmm1 and the outer mitochondrial membrane-resident beta-barrel protein mdm10. In Pyrenophora tritici-repentis (strain Pt-1C-BFP) (Wheat tan spot fungus), this protein is Mitochondrial distribution and morphology protein 34.